A 464-amino-acid chain; its full sequence is tRNA modification GTPase MnmE (464 aa).

Residues Arg27, Glu90, and Lys129 each coordinate (6S)-5-formyl-5,6,7,8-tetrahydrofolate. The TrmE-type G domain occupies 222-384 (GIALVLAGSV…LYDKIRSLTC (163 aa)). GTP contacts are provided by residues 232 to 237 (NVGKSS), 251 to 257 (SSYAGTT), and 276 to 279 (DTAG). Mg(2+)-binding residues include Ser236 and Thr257. Residue Lys464 participates in (6S)-5-formyl-5,6,7,8-tetrahydrofolate binding.

The protein belongs to the TRAFAC class TrmE-Era-EngA-EngB-Septin-like GTPase superfamily. TrmE GTPase family. Homodimer. Heterotetramer of two MnmE and two MnmG subunits. Requires K(+) as cofactor.

The protein resides in the cytoplasm. In terms of biological role, exhibits a very high intrinsic GTPase hydrolysis rate. Involved in the addition of a carboxymethylaminomethyl (cmnm) group at the wobble position (U34) of certain tRNAs, forming tRNA-cmnm(5)s(2)U34. The sequence is that of tRNA modification GTPase MnmE from Borrelia turicatae (strain 91E135).